The sequence spans 657 residues: DALGTGNANKQQDINHLLDKIYEPTKYPDLKDIAENFNPLGDTSIYNDHGAAAEALMKELNDHRLLEQRHWFSLFNTRQREEALMLFAVLNQCKEWYCFRSNAAYFRERMNEGEFVYALYVSVIHSKLGDGIVLPPLYEITPHMFTNSEVIDKAYSAKMTQKPGTFNVSFTGTKKNREQRVAYFGEDIGMNIHHVTWHMDFPTWWQDSYGYHLDRKGELFFWVHHQLTARFDFERLSNWLDPVDELHWDRIIREGFAPLTSYKYGGEFPVRPDNIHFEDVDGVAHVHDLEITESRIHDAIDHGYITDSDGHTIDIRQPKGIELLGDIIESSMYSSNVQYYGSLHNTAHAMLGRQGDPHGKFNLPPGVMEHFETATRDPSFFRLHKYMDNIFKKHTDSFPPYTHDDLEFAGMVVDGIAIDGELITFFDEFQYSILNAVDSGENIEDVDINARVHRLNHNEFTYKITMSNNNDGERLATFRIFLCPIEDNNGITLTLDEARWFCIELDKFFQKVPSGPETIERSSKDSSVTVPDMPSFQSLKEQADNAVNGGHDLDLSAYERSCGIPDRMLLPKSKPEGMKFNLYVAVTDGDKDTEGHNGGHDYGGTHAQCGVHGEAFPDNRPLGYPLERRIPDERVIDGVSNIKHVVVKIVHHLEHHD.

The cysteines at positions 93 and 98 are disulfide-linked. Asn167 is a glycosylation site (N-linked (GlcNAc...) asparagine). The Cu cation site is built by His194, His198, His224, His344, His348, and His384. 2 disulfides stabilise this stretch: Cys483/Cys502 and Cys562/Cys609.

This sequence belongs to the tyrosinase family. Hemocyanin subfamily. In terms of assembly, hexamer of a number of different chains, of which A, B, and C have been identified. As to expression, hemolymph.

Its subcellular location is the secreted. It localises to the extracellular space. Hemocyanins are copper-containing oxygen carriers occurring freely dissolved in the hemolymph of many mollusks and arthropods. This is Hemocyanin B chain from Panulirus interruptus (California spiny lobster).